Consider the following 393-residue polypeptide: S-adenosylmethionine synthase (393 aa).

Residue E10 coordinates Mg(2+). H16 lines the ATP pocket. E44 serves as a coordination point for K(+). L-methionine is bound by residues E57 and Q100. ATP-binding positions include D168–K170, S236–F239, D247, R253–K254, A270, K274, and K278. D247 contributes to the L-methionine binding site. K278 is a binding site for L-methionine.

Belongs to the AdoMet synthase family. In terms of assembly, homotetramer. The cofactor is Mn(2+). Mg(2+) is required as a cofactor. Requires Co(2+) as cofactor. K(+) serves as cofactor.

Its subcellular location is the cytoplasm. The catalysed reaction is L-methionine + ATP + H2O = S-adenosyl-L-methionine + phosphate + diphosphate. It functions in the pathway amino-acid biosynthesis; S-adenosyl-L-methionine biosynthesis; S-adenosyl-L-methionine from L-methionine: step 1/1. Functionally, catalyzes the formation of S-adenosylmethionine from methionine and ATP. The reaction comprises two steps that are both catalyzed by the same enzyme: formation of S-adenosylmethionine (AdoMet) and triphosphate, and subsequent hydrolysis of the triphosphate. The protein is S-adenosylmethionine synthase (METK) of Musa acuminata (Banana).